Consider the following 428-residue polypeptide: Tyrosine--tRNA ligase (428 aa).

Tyrosine 41 is an L-tyrosine binding site. The short motif at 46–55 is the 'HIGH' region element; that stretch reads PTADSLHLGH. The L-tyrosine site is built by tyrosine 179 and glutamine 183. A 'KMSKS' region motif is present at residues 239 to 243; the sequence is KFGKT. Lysine 242 is a binding site for ATP. The S4 RNA-binding domain occupies 361–418; sequence TDLMQALVDAELQPSRGQARKTIASNAVTINGEKQSDPEYIFNDEDRLFGRYTLLRRG.

Belongs to the class-I aminoacyl-tRNA synthetase family. TyrS type 1 subfamily. As to quaternary structure, homodimer.

It is found in the cytoplasm. It catalyses the reaction tRNA(Tyr) + L-tyrosine + ATP = L-tyrosyl-tRNA(Tyr) + AMP + diphosphate + H(+). Catalyzes the attachment of tyrosine to tRNA(Tyr) in a two-step reaction: tyrosine is first activated by ATP to form Tyr-AMP and then transferred to the acceptor end of tRNA(Tyr). This is Tyrosine--tRNA ligase from Salmonella arizonae (strain ATCC BAA-731 / CDC346-86 / RSK2980).